A 226-amino-acid chain; its full sequence is UPF0173 metal-dependent hydrolase CTN_1413 (226 aa).

Belongs to the UPF0173 family.

This chain is UPF0173 metal-dependent hydrolase CTN_1413, found in Thermotoga neapolitana (strain ATCC 49049 / DSM 4359 / NBRC 107923 / NS-E).